The following is a 136-amino-acid chain: Nucleoside diphosphate kinase (136 aa).

Positions 10, 58, 86, 92, 104, and 114 each coordinate ATP. Residue His117 is the Pros-phosphohistidine intermediate of the active site.

This sequence belongs to the NDK family. Homotetramer. It depends on Mg(2+) as a cofactor.

Its subcellular location is the cytoplasm. It catalyses the reaction a 2'-deoxyribonucleoside 5'-diphosphate + ATP = a 2'-deoxyribonucleoside 5'-triphosphate + ADP. It carries out the reaction a ribonucleoside 5'-diphosphate + ATP = a ribonucleoside 5'-triphosphate + ADP. Functionally, major role in the synthesis of nucleoside triphosphates other than ATP. The ATP gamma phosphate is transferred to the NDP beta phosphate via a ping-pong mechanism, using a phosphorylated active-site intermediate. The protein is Nucleoside diphosphate kinase of Corynebacterium jeikeium (strain K411).